A 61-amino-acid chain; its full sequence is Small ribosomal subunit protein uS14 (61 aa).

Cys24, Cys27, Cys40, and Cys43 together coordinate Zn(2+).

This sequence belongs to the universal ribosomal protein uS14 family. Zinc-binding uS14 subfamily. Part of the 30S ribosomal subunit. Contacts proteins S3 and S10. The cofactor is Zn(2+).

In terms of biological role, binds 16S rRNA, required for the assembly of 30S particles and may also be responsible for determining the conformation of the 16S rRNA at the A site. This Brevibacillus brevis (strain 47 / JCM 6285 / NBRC 100599) protein is Small ribosomal subunit protein uS14.